The primary structure comprises 477 residues: UDP-N-acetylmuramate--L-alanine ligase (477 aa).

122–128 (GTHGKTT) provides a ligand contact to ATP.

The protein belongs to the MurCDEF family.

Its subcellular location is the cytoplasm. It catalyses the reaction UDP-N-acetyl-alpha-D-muramate + L-alanine + ATP = UDP-N-acetyl-alpha-D-muramoyl-L-alanine + ADP + phosphate + H(+). It functions in the pathway cell wall biogenesis; peptidoglycan biosynthesis. Its function is as follows. Cell wall formation. In Xylella fastidiosa (strain M23), this protein is UDP-N-acetylmuramate--L-alanine ligase.